The chain runs to 428 residues: Adenylosuccinate synthetase (428 aa).

GTP contacts are provided by residues 12–18 (GDEGKGK) and 40–42 (GHT). D13 serves as the catalytic Proton acceptor. Residues D13 and G40 each coordinate Mg(2+). IMP contacts are provided by residues 13–16 (DEGK), 38–41 (NAGH), T130, R144, Q225, T240, and R304. H41 functions as the Proton donor in the catalytic mechanism. 300-306 (VTTGRAR) serves as a coordination point for substrate. Residues R306, 332-334 (KID), and 414-416 (SVG) contribute to the GTP site.

The protein belongs to the adenylosuccinate synthetase family. In terms of assembly, homodimer. Mg(2+) is required as a cofactor.

It localises to the cytoplasm. The enzyme catalyses IMP + L-aspartate + GTP = N(6)-(1,2-dicarboxyethyl)-AMP + GDP + phosphate + 2 H(+). It participates in purine metabolism; AMP biosynthesis via de novo pathway; AMP from IMP: step 1/2. Plays an important role in the de novo pathway of purine nucleotide biosynthesis. Catalyzes the first committed step in the biosynthesis of AMP from IMP. This chain is Adenylosuccinate synthetase, found in Clostridium botulinum (strain Okra / Type B1).